The sequence spans 331 residues: MEKEIKNILMEIEKKFGKESIMLLGSKQDLNVEIFSTGSLAIDHALGINGFPKGRIIEIYGPESSGKTTIALHAIAEIQKSGGVAAFIDAEHSIDPNYAKNLGVNIDNLILSQPDSGEQALEIVDILAKSSSIDLIVVDSVAALVPEVELNGEMKDQVMGAQARLMSKALRKITGSLNKSKTTVIFINQIREKIGTFFGNPETTPGGRALKFYSSIRLDVRKVSSVSTGEVISGNNIKIKVVKNKLSAPFKEAFTEIVFSKGISKISEAVEFAENLKIITRKGAWFYYNDQNIAQGKSNLKDLLEKNEALYSEILTKVISALSKENVNSIL.

Residue 61-68 coordinates ATP; it reads GPESSGKT.

It belongs to the RecA family.

Its subcellular location is the cytoplasm. Can catalyze the hydrolysis of ATP in the presence of single-stranded DNA, the ATP-dependent uptake of single-stranded DNA by duplex DNA, and the ATP-dependent hybridization of homologous single-stranded DNAs. It interacts with LexA causing its activation and leading to its autocatalytic cleavage. In Mycoplasma mobile (strain ATCC 43663 / 163K / NCTC 11711) (Mesomycoplasma mobile), this protein is Protein RecA.